The chain runs to 153 residues: Large ribosomal subunit protein uL23m (153 aa).

The interval 131 to 153 (MADEQQRQGSDPQRGGVPNWFSL) is disordered.

This sequence belongs to the universal ribosomal protein uL23 family. In terms of assembly, component of the mitochondrial ribosome large subunit (39S) which comprises a 16S rRNA and about 50 distinct proteins.

Its subcellular location is the mitochondrion. In Otolemur garnettii (Small-eared galago), this protein is Large ribosomal subunit protein uL23m (MRPL23).